The chain runs to 199 residues: Putative acetyltransferase SAV2555 (199 aa).

Belongs to the transferase hexapeptide repeat family.

This is Putative acetyltransferase SAV2555 from Staphylococcus aureus (strain Mu50 / ATCC 700699).